The sequence spans 590 residues: Multidrug and toxin extrusion protein 1 (590 aa).

Over 1–59 (MDSITSYNVTQMNGDTKQEKCDDVLSTSSTQKFCGGCRKKLRSLLPVNYKTEIVELLKL) the chain is Cytoplasmic. A helical membrane pass occupies residues 60–80 (AGPVFISQLMIFLISFVSTVF). The Extracellular portion of the chain corresponds to 81–88 (CGHLGKTE). The helical transmembrane segment at 89 to 109 (LAGVALAIAVINVTGISIGSG) threads the bilayer. The Cytoplasmic segment spans residues 110 to 137 (LASACDTLISQTFGSNNLKRVGVILQRG). The chain crosses the membrane as a helical span at residues 138 to 158 (ILILLLACFPCWALLINTEPI). The Extracellular segment spans residues 159–167 (LLAVRQSPN). A helical membrane pass occupies residues 168–188 (VASLSQLYVKIFMPALPAAFM). The Cytoplasmic segment spans residues 189-199 (YQLQGRYLQNQ). The helical transmembrane segment at 200-222 (GIIWPQVITGAAGNILNALINYV) threads the bilayer. At 223–231 (FLHLLELGV) the chain is on the extracellular side. The helical transmembrane segment at 232-254 (AGSAAANTISQYSLAVFLYVYIR) threads the bilayer. Topologically, residues 255-274 (WKNLHKATWDGWSRDCLQEW) are cytoplasmic. The chain crosses the membrane as a helical span at residues 275-294 (GAFIRLALPSMLMLCVEWWT). The Extracellular portion of the chain corresponds to 295-313 (YEIGGFLAGLISETELGAQ). Residues 314 to 334 (SVVYELATIAYMFPLGFAVAA) traverse the membrane as a helical segment. The Cytoplasmic segment spans residues 335 to 351 (SVRVGNALGAGNTERAK). Residues 352–372 (LSAKVALVCGVLVSCVVATLI) traverse the membrane as a helical segment. At 373–395 (GCTKDVIAYIFTTEEEIVSRVSQ) the chain is on the extracellular side. Residues 396–416 (VMIMYGFFHLFDAIAGITGGI) form a helical membrane-spanning segment. Topologically, residues 417–430 (VRGAGKQLLGALCN) are cytoplasmic. A helical transmembrane segment spans residues 431-451 (IVGYYFVGFPTGVSLMFALSM). Residue glycine 452 is a topological domain, extracellular. Residues 453-473 (IIGLWIGFFGCVFLQSLFFII) form a helical membrane-spanning segment. Residues 474-565 (LIYKLDWKKA…TTKQLIVRRG (92 aa)) lie on the Cytoplasmic side of the membrane. A helical transmembrane segment spans residues 566 to 586 (LAVLLMVLILAGGIVLNEMLV). Topologically, residues 587 to 590 (RYLR) are extracellular.

It belongs to the multi antimicrobial extrusion (MATE) (TC 2.A.66.1) family.

The protein localises to the cell membrane. In terms of biological role, solute transporter for tetraethylammonium (TEA), cimetidine, metformin, guanidine, N-methylnicotinamide (NMN) and also the zwitterionic cephalosporin cephalexin. Responsible for the secretion of cationic drugs across the brush border membranes. The sequence is that of Multidrug and toxin extrusion protein 1 (slc47a1) from Danio rerio (Zebrafish).